Consider the following 317-residue polypeptide: Aspartate carbamoyltransferase catalytic subunit (317 aa).

2 residues coordinate carbamoyl phosphate: Arg-66 and Thr-67. An L-aspartate-binding site is contributed by Lys-94. Arg-116, His-144, and Gln-147 together coordinate carbamoyl phosphate. 2 residues coordinate L-aspartate: Arg-177 and Arg-231. The carbamoyl phosphate site is built by Gly-272 and Pro-273.

This sequence belongs to the aspartate/ornithine carbamoyltransferase superfamily. ATCase family. Heterododecamer (2C3:3R2) of six catalytic PyrB chains organized as two trimers (C3), and six regulatory PyrI chains organized as three dimers (R2).

It catalyses the reaction carbamoyl phosphate + L-aspartate = N-carbamoyl-L-aspartate + phosphate + H(+). It functions in the pathway pyrimidine metabolism; UMP biosynthesis via de novo pathway; (S)-dihydroorotate from bicarbonate: step 2/3. Its function is as follows. Catalyzes the condensation of carbamoyl phosphate and aspartate to form carbamoyl aspartate and inorganic phosphate, the committed step in the de novo pyrimidine nucleotide biosynthesis pathway. In Beijerinckia indica subsp. indica (strain ATCC 9039 / DSM 1715 / NCIMB 8712), this protein is Aspartate carbamoyltransferase catalytic subunit.